The primary structure comprises 501 residues: UPF0371 protein CD630_08980 (501 aa).

This sequence belongs to the UPF0371 family.

In Clostridioides difficile (strain 630) (Peptoclostridium difficile), this protein is UPF0371 protein CD630_08980.